The chain runs to 173 residues: Rubredoxin-2 (173 aa).

2 consecutive Rubredoxin-like domains span residues 2–53 (ASYK…FMLI) and 119–170 (YLKW…YVLY). Fe cation-binding residues include Cys6, Cys9, Cys39, Cys42, Cys124, Cys127, Cys157, and Cys160.

This sequence belongs to the rubredoxin family. Fe(3+) serves as cofactor.

The protein resides in the cytoplasm. It participates in hydrocarbon metabolism; alkane degradation. Functionally, involved in the hydrocarbon hydroxylating system, which transfers electrons from NADH to rubredoxin reductase and then through rubredoxin to alkane 1 monooxygenase. The sequence is that of Rubredoxin-2 (alkG) from Ectopseudomonas oleovorans (Pseudomonas oleovorans).